The following is an 853-amino-acid chain: Penicillin-binding protein 1A (853 aa).

The Cytoplasmic portion of the chain corresponds to 1 to 6; it reads MRIAKL. A helical; Signal-anchor for type II membrane protein transmembrane segment spans residues 7–27; sequence ILNTLLTLCILGLVAGGMLYF. Topologically, residues 28–853 are periplasmic; that stretch reads HLKSELQQPM…TPATQPQELF (826 aa). Residues 37-205 form a transglycosylase region; the sequence is MQIYTADGKL…STMNPLYSLK (169 aa). Residue Glu-75 is the Proton donor; for transglycosylase activity of the active site. A transpeptidase region spans residues 387 to 681; it reads QRANGEWQLG…RVISGELAFL (295 aa). Ser-441 functions as the Acyl-ester intermediate; for transpeptidase activity in the catalytic mechanism. A disordered region spans residues 615–636; sequence NALKPTDDSTNGEELDQQPETV.

The protein in the N-terminal section; belongs to the glycosyltransferase 51 family. This sequence in the C-terminal section; belongs to the transpeptidase family.

The protein localises to the cell inner membrane. The catalysed reaction is [GlcNAc-(1-&gt;4)-Mur2Ac(oyl-L-Ala-gamma-D-Glu-L-Lys-D-Ala-D-Ala)](n)-di-trans,octa-cis-undecaprenyl diphosphate + beta-D-GlcNAc-(1-&gt;4)-Mur2Ac(oyl-L-Ala-gamma-D-Glu-L-Lys-D-Ala-D-Ala)-di-trans,octa-cis-undecaprenyl diphosphate = [GlcNAc-(1-&gt;4)-Mur2Ac(oyl-L-Ala-gamma-D-Glu-L-Lys-D-Ala-D-Ala)](n+1)-di-trans,octa-cis-undecaprenyl diphosphate + di-trans,octa-cis-undecaprenyl diphosphate + H(+). It carries out the reaction Preferential cleavage: (Ac)2-L-Lys-D-Ala-|-D-Ala. Also transpeptidation of peptidyl-alanyl moieties that are N-acyl substituents of D-alanine.. It participates in cell wall biogenesis; peptidoglycan biosynthesis. Cell wall formation. Synthesis of cross-linked peptidoglycan from the lipid intermediates. The enzyme has a penicillin-insensitive transglycosylase N-terminal domain (formation of linear glycan strands) and a penicillin-sensitive transpeptidase C-terminal domain (cross-linking of the peptide subunits). The sequence is that of Penicillin-binding protein 1A (mrcA) from Haemophilus influenzae (strain ATCC 51907 / DSM 11121 / KW20 / Rd).